The primary structure comprises 784 residues: Protein translocase subunit SecA 2 (784 aa).

ATP is bound by residues Gln94, 112–116, and Asp501; that span reads GEGKT.

The protein belongs to the SecA family. In terms of assembly, monomer and homodimer. Part of the essential Sec protein translocation apparatus which comprises SecA, SecYEG and auxiliary proteins SecDF. Other proteins may also be involved.

The protein resides in the cell membrane. Its subcellular location is the cytoplasm. It catalyses the reaction ATP + H2O + cellular proteinSide 1 = ADP + phosphate + cellular proteinSide 2.. Its function is as follows. Part of the Sec protein translocase complex. Interacts with the SecYEG preprotein conducting channel. Has a central role in coupling the hydrolysis of ATP to the transfer of proteins into and across the cell membrane, serving as an ATP-driven molecular motor driving the stepwise translocation of polypeptide chains across the membrane. The sequence is that of Protein translocase subunit SecA 2 from Mycolicibacterium smegmatis (strain ATCC 700084 / mc(2)155) (Mycobacterium smegmatis).